Reading from the N-terminus, the 58-residue chain is Photosystem II reaction center X protein (58 aa).

A helical membrane pass occupies residues 27–47 (IGSFLAAAAFIVVPAASFLIW).

Belongs to the PsbX family. Type 2 subfamily. PSII consists of a core antenna complex that captures photons, and an electron transfer chain that converts photonic excitation into a charge separation. PSII forms dimeric complexes.

It localises to the cellular thylakoid membrane. Involved in the binding and/or turnover of quinones at the Q(B) site of Photosystem II. This Prochlorococcus marinus (strain MIT 9211) protein is Photosystem II reaction center X protein.